We begin with the raw amino-acid sequence, 860 residues long: Transforming growth factor-beta receptor-associated protein 1 (860 aa).

A CNH domain is found at R24–V297. One copy of the CHCR repeat lies at R564 to P728.

Belongs to the TRAP1 family. In terms of assembly, interacts with TGFBR2 and ACVR2B; in the absence of ligand stimulation. Interacts with TGFBR1, ACVRL1, BMPR1A and ACVR1B; in the absence of ligand stimulation and to a less extent. Interacts with SMAD4; the interaction seems to be mutually exclusive with the interaction of SMAD4 and phosphorylated SMAD2. May interact with ALOX5. Interacts with RAB5C. Interacts with VPS8, VPS11 and VPS16. Component of the putative class C core vacuole/endosome tethering (CORVET) complex; the core of which composed of the class C Vps proteins VPS11, VPS16, VPS18 and VPS33A, is associated with VPS8 and TGFBRAP1.

Its subcellular location is the cytoplasm. It localises to the early endosome. In terms of biological role, plays a role in the TGF-beta/activin signaling pathway. It associates with inactive heteromeric TGF-beta and activin receptor complexes, mainly through the type II receptor, and is released upon activation of signaling. May recruit SMAD4 to the vicinity of the receptor complex and facilitate its interaction with receptor-regulated Smads, such as SMAD2. Plays a role in vesicle-mediated protein trafficking of the endocytic membrane transport pathway. Believed to act as a component of the putative CORVET endosomal tethering complexes which is proposed to be involved in the Rab5-to-Rab7 endosome conversion probably implicating MON1A/B, and via binding SNAREs and SNARE complexes to mediate tethering and docking events during SNARE-mediated membrane fusion. The CORVET complex is proposed to function as a Rab5 effector to mediate early endosome fusion probably in specific endosome subpopulations. Functions predominantly in APPL1-containing endosomes and in degradative but not recycling trafficking of endocytosed cargo. This chain is Transforming growth factor-beta receptor-associated protein 1 (TGFBRAP1), found in Homo sapiens (Human).